We begin with the raw amino-acid sequence, 604 residues long: Phenylalanine--tRNA ligase beta subunit (604 aa).

Residues 327–402 (YFQEKREVAH…LGRTLDRFSP (76 aa)) enclose the B5 domain. Residues Asp-380, Asp-386, Glu-389, and Glu-390 each contribute to the Mg(2+) site.

It belongs to the phenylalanyl-tRNA synthetase beta subunit family. Type 2 subfamily. In terms of assembly, tetramer of two alpha and two beta subunits. It depends on Mg(2+) as a cofactor.

Its subcellular location is the cytoplasm. The catalysed reaction is tRNA(Phe) + L-phenylalanine + ATP = L-phenylalanyl-tRNA(Phe) + AMP + diphosphate + H(+). The polypeptide is Phenylalanine--tRNA ligase beta subunit (Treponema pallidum subsp. pallidum (strain SS14)).